The following is a 156-amino-acid chain: Ribosomal RNA large subunit methyltransferase H (156 aa).

Residues leucine 73, glycine 104, and 123–128 contribute to the S-adenosyl-L-methionine site; that span reads LSSLTL.

It belongs to the RNA methyltransferase RlmH family. In terms of assembly, homodimer.

It is found in the cytoplasm. It carries out the reaction pseudouridine(1915) in 23S rRNA + S-adenosyl-L-methionine = N(3)-methylpseudouridine(1915) in 23S rRNA + S-adenosyl-L-homocysteine + H(+). Specifically methylates the pseudouridine at position 1915 (m3Psi1915) in 23S rRNA. The sequence is that of Ribosomal RNA large subunit methyltransferase H from Ralstonia nicotianae (strain ATCC BAA-1114 / GMI1000) (Ralstonia solanacearum).